We begin with the raw amino-acid sequence, 210 residues long: Actin-related protein 3C (210 aa).

The signal sequence occupies residues 1 to 21 (MFESFNVPGLYIAVQAVLALA).

This sequence belongs to the actin family. Expressed in kidney, stomach, spleen, bone marrow, uterus, testis, placenta, skeletal muscle, mammary gland, lung, fetal liver, and fetal kidney, but not detected in small intestine, brain, and thymus. Expressed in low-metastatic lung adenocarcinoma cells but not in high-metastatic ones.

Functionally, may play a role in the suppression of metastatic potential in lung adenoma carcinoma cells. The chain is Actin-related protein 3C (ACTR3C) from Homo sapiens (Human).